A 430-amino-acid chain; its full sequence is Serine--tRNA ligase (430 aa).

Residues 103–127 (LPNIPDDDVPDGRDENDNQEVSRWG) are disordered. Position 237 to 239 (237 to 239 (TAE)) interacts with L-serine. 268-270 (RSE) contributes to the ATP binding site. Glutamate 291 lines the L-serine pocket. 355–358 (EISS) serves as a coordination point for ATP. L-serine is bound at residue serine 391.

The protein belongs to the class-II aminoacyl-tRNA synthetase family. Type-1 seryl-tRNA synthetase subfamily. In terms of assembly, homodimer. The tRNA molecule binds across the dimer.

The protein localises to the cytoplasm. The enzyme catalyses tRNA(Ser) + L-serine + ATP = L-seryl-tRNA(Ser) + AMP + diphosphate + H(+). It carries out the reaction tRNA(Sec) + L-serine + ATP = L-seryl-tRNA(Sec) + AMP + diphosphate + H(+). It functions in the pathway aminoacyl-tRNA biosynthesis; selenocysteinyl-tRNA(Sec) biosynthesis; L-seryl-tRNA(Sec) from L-serine and tRNA(Sec): step 1/1. In terms of biological role, catalyzes the attachment of serine to tRNA(Ser). Is also able to aminoacylate tRNA(Sec) with serine, to form the misacylated tRNA L-seryl-tRNA(Sec), which will be further converted into selenocysteinyl-tRNA(Sec). This chain is Serine--tRNA ligase, found in Sodalis glossinidius (strain morsitans).